A 320-amino-acid chain; its full sequence is Glucosaminate ammonia-lyase (320 aa).

36 to 43 contacts FAD; it reads TGMQAGGQ. A disulfide bridge connects residues Cys136 and Cys139. An FAD-binding site is contributed by 285–294; that stretch reads DVADHVYRQA.

This sequence belongs to the class-II pyridine nucleotide-disulfide oxidoreductase family.

It catalyses the reaction 2-amino-2-deoxy-D-gluconate = 2-dehydro-3-deoxy-D-gluconate + NH4(+). Functionally, catalyzes the conversion of 2-amino-2-deoxy-D-gluconate (GlcNA) to 2-keto-3-deoxy-D-gluconic acid (KDGA) and ammonia. The chain is Glucosaminate ammonia-lyase from Pseudomonas fluorescens.